A 255-amino-acid chain; its full sequence is Type III pantothenate kinase (255 aa).

Position 6–13 (6–13) interacts with ATP; that stretch reads DVGNSYTM. 107-110 lines the substrate pocket; sequence GADR. The Proton acceptor role is filled by Asp-109. K(+) is bound at residue Asp-129. ATP is bound at residue Thr-132. Thr-183 provides a ligand contact to substrate.

This sequence belongs to the type III pantothenate kinase family. In terms of assembly, homodimer. It depends on NH4(+) as a cofactor. Requires K(+) as cofactor.

The protein resides in the cytoplasm. The enzyme catalyses (R)-pantothenate + ATP = (R)-4'-phosphopantothenate + ADP + H(+). Its pathway is cofactor biosynthesis; coenzyme A biosynthesis; CoA from (R)-pantothenate: step 1/5. Its function is as follows. Catalyzes the phosphorylation of pantothenate (Pan), the first step in CoA biosynthesis. In Petrotoga mobilis (strain DSM 10674 / SJ95), this protein is Type III pantothenate kinase.